The chain runs to 350 residues: C5a anaphylatoxin chemotactic receptor 1 (350 aa).

Over 1-37 (MDSFNYTTPDYGHYDDKDTLDLNTPVDKTSNTLRVPD) the chain is Extracellular. Asn-5 is a glycosylation site (N-linked (GlcNAc...) asparagine). The interval 10-18 (DYGHYDDKD) is required for CHIPS binding. Sulfotyrosine occurs at positions 11 and 14. Positions 21–30 (DLNTPVDKTS) are involved in C5a binding. The helical transmembrane segment at 38 to 64 (ILALVIFAVVFLVGVLGNALVVWVTAF) threads the bilayer. The Cytoplasmic segment spans residues 65–69 (EAKRT). The helical transmembrane segment at 70–93 (INAIWFLNLAVADFLSCLALPILF) threads the bilayer. Residues 94–110 (TSIVQHHHWPFGGAACS) are Extracellular-facing. Cysteines 109 and 188 form a disulfide. The helical transmembrane segment at 111–132 (ILPSLILLNMYASILLLATISA) threads the bilayer. At 133–153 (DRFLLVFKPIWCQNFRGAGLA) the chain is on the cytoplasmic side. Residues 154 to 174 (WIACAVAWGLALLLTIPSFLY) traverse the membrane as a helical segment. Residues 175–200 (RVVREEYFPPKVLCGVDYSHDKRRER) are Extracellular-facing. The chain crosses the membrane as a helical span at residues 201 to 226 (AVAIVRLVLGFLWPLLTLTICYTFIL). The Cytoplasmic segment spans residues 227–242 (LRTWSRRATRSTKTLK). A helical transmembrane segment spans residues 243–265 (VVVAVVASFFIFWLPYQVTGIMM). Over 266-282 (SFLEPSSPTFLLLKKLD) the chain is Extracellular. The helical transmembrane segment at 283-303 (SLCVSFAYINCCINPIIYVVA) threads the bilayer. Residues 304–350 (GQGFQGRLRKSLPSLLRNVLTEESVVRESKSFTRSTVDTMAQKTQAV) are Cytoplasmic-facing. Phosphoserine occurs at positions 314, 317, 327, 332, 334, and 338.

It belongs to the G-protein coupled receptor 1 family. As to quaternary structure, homodimer. May also form higher-order oligomers. Interacts (when phosphorylated) with ARRB1 and ARRB2; the interaction is associated with internalization of C5aR. Interacts (via N-terminal domain) with S.aureus chemotaxis inhibitory protein (CHIPS); the interaction blocks the receptor and may thus inhibit the immune response. In terms of processing, sulfation plays a critical role in the association of C5aR with C5a, but no significant role in the ability of the receptor to transduce a signal and mobilize calcium in response to a small a small peptide agonist. Sulfation at Tyr-14 is important for CHIPS binding. Phosphorylated on serine residues in response to C5a binding, resulting in internalization of the receptor and short-term desensitization to the ligand. The key residues involved in this process are Ser-334 and Ser-338.

The protein resides in the cell membrane. The protein localises to the cytoplasmic vesicle. In terms of biological role, receptor for the chemotactic and inflammatory peptide anaphylatoxin C5a. The ligand interacts with at least two sites on the receptor: a high-affinity site on the extracellular N-terminus, and a second site in the transmembrane region which activates downstream signaling events. Receptor activation stimulates chemotaxis, granule enzyme release, intracellular calcium release and superoxide anion production. This Homo sapiens (Human) protein is C5a anaphylatoxin chemotactic receptor 1 (C5AR1).